A 597-amino-acid chain; its full sequence is Fructan 1-exohydrolase w1 (597 aa).

Residues 1 to 20 (MAQAWAFLLPVLVFGSYVTS) form the signal peptide. Residue Asp-76 is part of the active site. Residues Asn-169, Asn-237, and Asn-249 are each glycosylated (N-linked (GlcNAc...) asparagine). A disulfide bond links Cys-447 and Cys-493. Asn-568 is a glycosylation site (N-linked (GlcNAc...) asparagine).

It belongs to the glycosyl hydrolase 32 family.

The enzyme catalyses Hydrolysis of terminal, non-reducing (2-&gt;1)-linked beta-D-fructofuranose residues in fructans.. With respect to regulation, inhibited by sucrose. Hydrolyzes inulin-type beta-(2,1)-fructans and beta-(2,1)-linkages in branched fructans. Has low activity against beta-(2,6)-linked fructans. May play a role as a beta-(2,1)-trimmer during graminan biosynthesis. This chain is Fructan 1-exohydrolase w1, found in Triticum aestivum (Wheat).